The chain runs to 521 residues: Maturase K (521 aa).

It belongs to the intron maturase 2 family. MatK subfamily.

It localises to the plastid. Its function is as follows. Usually encoded in the trnK tRNA gene intron. Probably assists in splicing its own and other chloroplast group II introns. This is Maturase K from Cuscuta exaltata (Tall dodder).